We begin with the raw amino-acid sequence, 764 residues long: Myotubularin-related protein 10-B (764 aa).

In terms of domain architecture, Myotubularin phosphatase spans 208–649; that stretch reads FESYSDWDRE…THIQIWKLCY (442 aa).

The protein belongs to the protein-tyrosine phosphatase family. Non-receptor class myotubularin subfamily.

This Xenopus laevis (African clawed frog) protein is Myotubularin-related protein 10-B (mtmr10-b).